The chain runs to 289 residues: ATP synthase gamma chain (289 aa).

The protein belongs to the ATPase gamma chain family. As to quaternary structure, F-type ATPases have 2 components, CF(1) - the catalytic core - and CF(0) - the membrane proton channel. CF(1) has five subunits: alpha(3), beta(3), gamma(1), delta(1), epsilon(1). CF(0) has three main subunits: a, b and c.

Its subcellular location is the cell inner membrane. In terms of biological role, produces ATP from ADP in the presence of a proton gradient across the membrane. The gamma chain is believed to be important in regulating ATPase activity and the flow of protons through the CF(0) complex. The sequence is that of ATP synthase gamma chain from Erwinia tasmaniensis (strain DSM 17950 / CFBP 7177 / CIP 109463 / NCPPB 4357 / Et1/99).